Reading from the N-terminus, the 124-residue chain is Small polypeptide ROTUNDIFOLIA LIKE 3 (124 aa).

The interval 1–25 (MEDERWKLSSSKGRSKSGRSCSSSS) is disordered. Asn-35 and Asn-38 each carry an N-linked (GlcNAc...) asparagine glycan. The helical transmembrane segment at 59–75 (AWSAAGAGGGGASSSSS) threads the bilayer. Positions 60–95 (WSAAGAGGGGASSSSSSQHQHQQQQQQSNNSQRLSK) are disordered. Low complexity predominate over residues 71–91 (SSSSSSQHQHQQQQQQSNNSQ). N-linked (GlcNAc...) asparagine glycosylation is present at Asn-88. A required for DVL/RTFL small polypeptide activity region spans residues 92–124 (RLSKKCVEAVKEHRARFYIVRRCVSMLVCWRDY).

The protein belongs to the DVL/RTFL small polypeptides family.

Its subcellular location is the cell membrane. Functionally, small polypeptide acting as a regulatory molecule which coordinates cellular responses required for differentiation, growth and development, probably by restricting polar cell proliferation in lateral organs (e.g. leaves and petioles). The sequence is that of Small polypeptide ROTUNDIFOLIA LIKE 3 from Oryza sativa subsp. indica (Rice).